The primary structure comprises 54 residues: Salt stress-induced hydrophobic peptide ESI3 (54 aa).

2 consecutive transmembrane segments (helical) span residues 2–22 (GSAT…GVFL) and 34–54 (LLLT…VLVV).

This sequence belongs to the UPF0057 (PMP3) family.

Its subcellular location is the membrane. In Thinopyrum elongatum (Tall wheatgrass), this protein is Salt stress-induced hydrophobic peptide ESI3 (ESI3).